Consider the following 778-residue polypeptide: Endonuclease MutS2 (778 aa).

328 to 335 (GPNTGGKT) lines the ATP pocket. One can recognise a Smr domain in the interval 702-777 (LDLRGKRYEE…GSGATIVTFK (76 aa)).

It belongs to the DNA mismatch repair MutS family. MutS2 subfamily. As to quaternary structure, homodimer. Binds to stalled ribosomes, contacting rRNA.

In terms of biological role, endonuclease that is involved in the suppression of homologous recombination and thus may have a key role in the control of bacterial genetic diversity. Acts as a ribosome collision sensor, splitting the ribosome into its 2 subunits. Detects stalled/collided 70S ribosomes which it binds and splits by an ATP-hydrolysis driven conformational change. Acts upstream of the ribosome quality control system (RQC), a ribosome-associated complex that mediates the extraction of incompletely synthesized nascent chains from stalled ribosomes and their subsequent degradation. Probably generates substrates for RQC. The chain is Endonuclease MutS2 from Streptococcus pneumoniae (strain CGSP14).